We begin with the raw amino-acid sequence, 900 residues long: Periodic tryptophan protein 2 (900 aa).

WD repeat units follow at residues 10–47 (GAPY…SVTL), 50–89 (ETST…VLHR), 91–129 (TFKD…RAVL), 139–178 (NSDD…GVLN), and 185–229 (GHRD…VKMD). Positions 228-284 (MDESEDGHSEPPSPVTPDRADEVMVENGGGVGTELKKRKEYDGKGLESDEEGDDDDE) are disordered. The span at 261-274 (ELKKRKEYDGKGLE) shows a compositional bias: basic and acidic residues. Ser-275 bears the Phosphoserine mark. Residues 275 to 284 (SDEEGDDDDE) show a composition bias toward acidic residues. WD repeat units lie at residues 302–341 (QASA…CIHL), 344–384 (ISRQ…YILK), 387–426 (GHYF…CFIT), 429–468 (EHTN…NYKT), 472–512 (PTPR…IKDI), 515–554 (GHEA…GTVE), 557–596 (RHNH…LMYT), and 619–658 (SSGK…LLRR). The interval 684–720 (PIDLIDDDNSDEEGGIDKQSRGNLGYDLPGSRPNRGR) is disordered. Acidic residues predominate over residues 687–697 (LIDDDNSDEEG). One copy of the WD 14 repeat lies at 720 to 759 (RPIIRTKSLSIAPTGRSFAAATTEGVLIFSIDDTFIFDPT).

It belongs to the WD repeat PWP2 family. In terms of assembly, component of the ribosomal small subunit (SSU) processome. Interacts with TBP1 in the nucleus. In terms of tissue distribution, expressed constitutively and ubiquitously; observed in seeds, seedlings, roots, leaves, stems, flowers and siliques.

It localises to the nucleus. Its subcellular location is the nucleolus. Involved in nucleolar processing of pre-18S ribosomal RNA. Plays a role early in ribosome biogenesis, especially in the maturation of 5.8S rRNA. Required for guard cell functions. In Arabidopsis thaliana (Mouse-ear cress), this protein is Periodic tryptophan protein 2.